We begin with the raw amino-acid sequence, 642 residues long: Cysteine-rich receptor-like protein kinase 27 (642 aa).

The signal sequence occupies residues 1–24 (MASTSIMLSSFFSFFFLTFFVTYA). The Extracellular segment spans residues 25–274 (QQNVTVHTIC…QGKSKDRSKT (250 aa)). Residues Asn-27, Asn-40, Asn-44, Asn-70, Asn-145, Asn-173, and Asn-258 are each glycosylated (N-linked (GlcNAc...) asparagine). Gnk2-homologous domains follow at residues 29–130 (TVHT…SRII) and 136–240 (PVPF…VYPF). Residues 275–295 (LIFAVVPIVAIILGLVFLFIY) traverse the membrane as a helical segment. Residues 296–642 (LKRRRKKKTL…DVSLTDLSAR (347 aa)) lie on the Cytoplasmic side of the membrane. The 288-residue stretch at 333-620 (FSLTNKIGEG…QLPKPSQPGF (288 aa)) folds into the Protein kinase domain. ATP is bound by residues 339–347 (IGEGGFGVV) and Lys-361. Residue Tyr-406 is modified to Phosphotyrosine. Catalysis depends on Asp-458, which acts as the Proton acceptor. A Phosphoserine modification is found at Ser-462. Position 498 is a phosphothreonine (Thr-498). Tyr-506 carries the phosphotyrosine modification.

This sequence belongs to the protein kinase superfamily. Ser/Thr protein kinase family. CRK subfamily.

It is found in the membrane. The catalysed reaction is L-seryl-[protein] + ATP = O-phospho-L-seryl-[protein] + ADP + H(+). It carries out the reaction L-threonyl-[protein] + ATP = O-phospho-L-threonyl-[protein] + ADP + H(+). In Arabidopsis thaliana (Mouse-ear cress), this protein is Cysteine-rich receptor-like protein kinase 27 (CRK27).